The following is a 103-amino-acid chain: Large ribosomal subunit protein bL21 (103 aa).

This sequence belongs to the bacterial ribosomal protein bL21 family. Part of the 50S ribosomal subunit. Contacts protein L20.

This protein binds to 23S rRNA in the presence of protein L20. This is Large ribosomal subunit protein bL21 from Pseudomonas aeruginosa (strain LESB58).